A 366-amino-acid chain; its full sequence is 3-dehydroquinate synthase (366 aa).

NAD(+) is bound by residues 75-80, 109-113, 133-134, Lys-146, Lys-155, and 173-176; these read DGEQYK, GVIGD, TT, and CLST. Residues Glu-188, His-251, and His-268 each contribute to the Zn(2+) site.

The protein belongs to the sugar phosphate cyclases superfamily. Dehydroquinate synthase family. It depends on Co(2+) as a cofactor. Zn(2+) is required as a cofactor. The cofactor is NAD(+).

Its subcellular location is the cytoplasm. It catalyses the reaction 7-phospho-2-dehydro-3-deoxy-D-arabino-heptonate = 3-dehydroquinate + phosphate. Its pathway is metabolic intermediate biosynthesis; chorismate biosynthesis; chorismate from D-erythrose 4-phosphate and phosphoenolpyruvate: step 2/7. Its function is as follows. Catalyzes the conversion of 3-deoxy-D-arabino-heptulosonate 7-phosphate (DAHP) to dehydroquinate (DHQ). This is 3-dehydroquinate synthase from Vibrio campbellii (strain ATCC BAA-1116).